A 443-amino-acid chain; its full sequence is Threonine/serine transporter TdcC (443 aa).

A run of 11 helical transmembrane segments spans residues 24–44, 45–65, 95–115, 140–160, 163–183, 207–227, 259–279, 319–339, 363–383, 385–405, and 423–443; these read WVLGLFGTAIGAGVLFFPISA, GIGGLLPIIFMLILAFPIAFF, VGGVVITFLYFFAICPLLWIY, VVALAILLVMAFFIYFGKDLM, VMGYLVFPFITCLVLISLSLI, ILVTVWLGIAIMVFSFNFSPI, ASVLMVVVVMFFAFSCLFTLS, ASIIALVAIFKSFFGHYLGTL, LNMISMVIIMGSTWVIAYINP, ILDLIGAMGAPIIAALLCLLP, and SNYFVTIIGLLTILNIVYQLM.

This sequence belongs to the amino acid/polyamine transporter 2 family. SdaC/TdcC subfamily.

The protein localises to the cell inner membrane. It catalyses the reaction L-threonine(in) + H(+)(in) = L-threonine(out) + H(+)(out). It carries out the reaction L-serine(in) + H(+)(in) = L-serine(out) + H(+)(out). Its function is as follows. Involved in the import of threonine and serine into the cell, with the concomitant import of a proton (symport system). The sequence is that of Threonine/serine transporter TdcC from Edwardsiella piscicida.